The primary structure comprises 259 residues: 3-deoxy-manno-octulosonate cytidylyltransferase (259 aa).

This sequence belongs to the KdsB family.

It is found in the cytoplasm. The catalysed reaction is 3-deoxy-alpha-D-manno-oct-2-ulosonate + CTP = CMP-3-deoxy-beta-D-manno-octulosonate + diphosphate. It participates in nucleotide-sugar biosynthesis; CMP-3-deoxy-D-manno-octulosonate biosynthesis; CMP-3-deoxy-D-manno-octulosonate from 3-deoxy-D-manno-octulosonate and CTP: step 1/1. The protein operates within bacterial outer membrane biogenesis; lipopolysaccharide biosynthesis. Its function is as follows. Activates KDO (a required 8-carbon sugar) for incorporation into bacterial lipopolysaccharide in Gram-negative bacteria. The protein is 3-deoxy-manno-octulosonate cytidylyltransferase of Xanthomonas oryzae pv. oryzae (strain KACC10331 / KXO85).